The following is a 570-amino-acid chain: Urease subunit alpha (570 aa).

The Urease domain occupies 131 to 570 (GGFDSHIHFI…LPLAQRYFMF (440 aa)). Ni(2+)-binding residues include H136, H138, and K219. K219 is modified (N6-carboxylysine). Position 221 (H221) interacts with substrate. Residues H248 and H274 each coordinate Ni(2+). Catalysis depends on H322, which acts as the Proton donor. D362 contacts Ni(2+).

This sequence belongs to the metallo-dependent hydrolases superfamily. Urease alpha subunit family. As to quaternary structure, heterotrimer of UreA (gamma), UreB (beta) and UreC (alpha) subunits. Three heterotrimers associate to form the active enzyme. Ni cation is required as a cofactor. Carboxylation allows a single lysine to coordinate two nickel ions.

Its subcellular location is the cytoplasm. It carries out the reaction urea + 2 H2O + H(+) = hydrogencarbonate + 2 NH4(+). The protein operates within nitrogen metabolism; urea degradation; CO(2) and NH(3) from urea (urease route): step 1/1. In Rhodopseudomonas palustris (strain ATCC BAA-98 / CGA009), this protein is Urease subunit alpha.